A 150-amino-acid chain; its full sequence is D-aminoacyl-tRNA deacylase (150 aa).

The Gly-cisPro motif, important for rejection of L-amino acids signature appears at 136–137 (GP).

The protein belongs to the DTD family. Homodimer.

Its subcellular location is the cytoplasm. The catalysed reaction is glycyl-tRNA(Ala) + H2O = tRNA(Ala) + glycine + H(+). The enzyme catalyses a D-aminoacyl-tRNA + H2O = a tRNA + a D-alpha-amino acid + H(+). An aminoacyl-tRNA editing enzyme that deacylates mischarged D-aminoacyl-tRNAs. Also deacylates mischarged glycyl-tRNA(Ala), protecting cells against glycine mischarging by AlaRS. Acts via tRNA-based rather than protein-based catalysis; rejects L-amino acids rather than detecting D-amino acids in the active site. By recycling D-aminoacyl-tRNA to D-amino acids and free tRNA molecules, this enzyme counteracts the toxicity associated with the formation of D-aminoacyl-tRNA entities in vivo and helps enforce protein L-homochirality. In Staphylococcus epidermidis (strain ATCC 35984 / DSM 28319 / BCRC 17069 / CCUG 31568 / BM 3577 / RP62A), this protein is D-aminoacyl-tRNA deacylase.